A 37-amino-acid chain; its full sequence is Esculentin-2L (37 aa).

C31 and C37 form a disulfide bridge.

As to expression, expressed by the skin glands.

Its subcellular location is the secreted. Antibacterial activity against Gram-positive bacterium S.aureus and Gram-negative bacterium E.coli. Has activity against C.albicans. This is Esculentin-2L from Rana luteiventris (Columbia spotted frog).